The sequence spans 137 residues: Putative pre-16S rRNA nuclease (137 aa).

It belongs to the YqgF nuclease family.

It localises to the cytoplasm. Could be a nuclease involved in processing of the 5'-end of pre-16S rRNA. This Bacillus cereus (strain B4264) protein is Putative pre-16S rRNA nuclease.